We begin with the raw amino-acid sequence, 499 residues long: Lipopolysaccharide core galacturonosyltransferase RgtA (499 aa).

10 consecutive transmembrane segments (helical) span residues 11-31 (TAGL…IVLP), 74-94 (IGAL…FYGL), 103-123 (EALA…SYMA), 125-145 (QDLT…YGFF), 165-185 (IGLI…IAIL), 199-219 (MLAA…WLQG), 248-268 (LLAF…IFAA), 291-311 (MMLA…STTV), 316-336 (LDPF…AAGL), and 351-371 (VLMA…GLIG).

Belongs to the glycosyltransferase 83 family.

It localises to the cell inner membrane. It participates in bacterial outer membrane biogenesis; LPS core biosynthesis. In terms of biological role, involved in the modification of the lipopolysaccharide (LPS) inner core. Catalyzes the transfer of a galacturonic acid (GalA) residue to the 4-position of the outer Kdo (3-deoxy-D-manno-octulosonic acid) residue of the LPS inner core, using dodecaprenyl phosphate-GalA as the donor substrate. GalA addition by RgtA is required for RgtB activity. This is Lipopolysaccharide core galacturonosyltransferase RgtA from Rhizobium johnstonii (strain DSM 114642 / LMG 32736 / 3841) (Rhizobium leguminosarum bv. viciae).